The sequence spans 517 residues: Bifunctional purine biosynthesis protein PurH (517 aa).

An MGS-like domain is found at 1–145 (MSPLALVSVS…KNHKDVSVLV (145 aa)).

Belongs to the PurH family.

The catalysed reaction is (6R)-10-formyltetrahydrofolate + 5-amino-1-(5-phospho-beta-D-ribosyl)imidazole-4-carboxamide = 5-formamido-1-(5-phospho-D-ribosyl)imidazole-4-carboxamide + (6S)-5,6,7,8-tetrahydrofolate. It carries out the reaction IMP + H2O = 5-formamido-1-(5-phospho-D-ribosyl)imidazole-4-carboxamide. The protein operates within purine metabolism; IMP biosynthesis via de novo pathway; 5-formamido-1-(5-phospho-D-ribosyl)imidazole-4-carboxamide from 5-amino-1-(5-phospho-D-ribosyl)imidazole-4-carboxamide (10-formyl THF route): step 1/1. It participates in purine metabolism; IMP biosynthesis via de novo pathway; IMP from 5-formamido-1-(5-phospho-D-ribosyl)imidazole-4-carboxamide: step 1/1. This chain is Bifunctional purine biosynthesis protein PurH, found in Prochlorococcus marinus (strain MIT 9312).